A 294-amino-acid chain; its full sequence is Elongation factor Ts (294 aa).

An involved in Mg(2+) ion dislocation from EF-Tu region spans residues 81-84 (TDFV).

The protein belongs to the EF-Ts family.

It is found in the cytoplasm. Its function is as follows. Associates with the EF-Tu.GDP complex and induces the exchange of GDP to GTP. It remains bound to the aminoacyl-tRNA.EF-Tu.GTP complex up to the GTP hydrolysis stage on the ribosome. This Levilactobacillus brevis (strain ATCC 367 / BCRC 12310 / CIP 105137 / JCM 1170 / LMG 11437 / NCIMB 947 / NCTC 947) (Lactobacillus brevis) protein is Elongation factor Ts.